The following is a 116-amino-acid chain: Protein Rev (116 aa).

S5 and S8 each carry phosphoserine; by host CK2. The interval 18-26 is homomultimerization; the sequence is LIKILYQSN. The segment at 26–50 is disordered; the sequence is NPYPKPNGSRQARRNRRRRWRARQN. The short motif at 34-50 is the Nuclear localization signal and RNA-binding (RRE) element; the sequence is SRQARRNRRRRWRARQN. A compositionally biased stretch (basic residues) spans 36 to 47; it reads QARRNRRRRWRA. Residues 73–84 carry the Nuclear export signal and binding to XPO1 motif; it reads LQLPPIERLRLD. The interval 91–116 is disordered; it reads NSGTQGVGDPQISGEPCMVLGAGTKE. Phosphoserine; by host is present on S92.

It belongs to the HIV-1 REV protein family. In terms of assembly, homomultimer; when bound to the RRE. Multimeric assembly is essential for activity and may involve XPO1. Binds to human KPNB1, XPO1, TNPO1, RANBP5 and IPO7. Interacts with the viral Integrase. Interacts with human KHDRBS1. Interacts with human NAP1; this interaction decreases Rev multimerization and stimulates its activity. Interacts with human DEAD-box helicases DDX3 and DDX24; these interactions may serve for viral RNA export to the cytoplasm and packaging, respectively. Interacts with human PSIP1; this interaction may inhibit HIV-1 DNA integration by promoting dissociation of the Integrase-LEDGF/p75 complex. Asymmetrically arginine dimethylated at one site by host PRMT6. Methylation impairs the RNA-binding activity and export of viral RNA from the nucleus to the cytoplasm. Post-translationally, phosphorylated by protein kinase CK2. Presence of, and maybe binding to the N-terminus of the regulatory beta subunit of CK2 is necessary for CK2-mediated Rev's phosphorylation.

It is found in the host nucleus. Its subcellular location is the host nucleolus. It localises to the host cytoplasm. In terms of biological role, escorts unspliced or incompletely spliced viral pre-mRNAs (late transcripts) out of the nucleus of infected cells. These pre-mRNAs carry a recognition sequence called Rev responsive element (RRE) located in the env gene, that is not present in fully spliced viral mRNAs (early transcripts). This function is essential since most viral proteins are translated from unspliced or partially spliced pre-mRNAs which cannot exit the nucleus by the pathway used by fully processed cellular mRNAs. Rev itself is translated from a fully spliced mRNA that readily exits the nucleus. Rev's nuclear localization signal (NLS) binds directly to KPNB1/Importin beta-1 without previous binding to KPNA1/Importin alpha-1. KPNB1 binds to the GDP bound form of RAN (Ran-GDP) and targets Rev to the nucleus. In the nucleus, the conversion from Ran-GDP to Ran-GTP dissociates Rev from KPNB1 and allows Rev's binding to the RRE in viral pre-mRNAs. Rev multimerization on the RRE via cooperative assembly exposes its nuclear export signal (NES) to the surface. Rev can then form a complex with XPO1/CRM1 and Ran-GTP, leading to nuclear export of the complex. Conversion from Ran-GTP to Ran-GDP mediates dissociation of the Rev/RRE/XPO1/RAN complex, so that Rev can return to the nucleus for a subsequent round of export. Beside KPNB1, also seems to interact with TNPO1/Transportin-1, RANBP5/IPO5 and IPO7/RANBP7 for nuclear import. The nucleoporin-like HRB/RIP is an essential cofactor that probably indirectly interacts with Rev to release HIV RNAs from the perinuclear region to the cytoplasm. This Homo sapiens (Human) protein is Protein Rev.